Reading from the N-terminus, the 166-residue chain is Deglycase TK1284 (166 aa).

In terms of domain architecture, PfpI endopeptidase spans 1 to 166 (MKVLILSADG…WMREFVKLLR (166 aa)). Residue histidine 101 is part of the active site.

The protein belongs to the peptidase C56 family. As to quaternary structure, homohexamer formed by a dimer of trimers that assemble into a hollow ring structure.

It localises to the cytoplasm. The catalysed reaction is N(omega)-(1-hydroxy-2-oxopropyl)-L-arginyl-[protein] + H2O = lactate + L-arginyl-[protein] + H(+). It carries out the reaction N(6)-(1-hydroxy-2-oxopropyl)-L-lysyl-[protein] + H2O = lactate + L-lysyl-[protein] + H(+). The enzyme catalyses S-(1-hydroxy-2-oxopropyl)-L-cysteinyl-[protein] + H2O = lactate + L-cysteinyl-[protein] + H(+). It catalyses the reaction N(omega)-(1-hydroxy-2-oxoethyl)-L-arginyl-[protein] + H2O = L-arginyl-[protein] + glycolate + H(+). The catalysed reaction is N(6)-(1-hydroxy-2-oxoethyl)-L-lysyl-[protein] + H2O = glycolate + L-lysyl-[protein] + H(+). It carries out the reaction S-(1-hydroxy-2-oxoethyl)-L-cysteinyl-[protein] + H2O = glycolate + L-cysteinyl-[protein] + H(+). In terms of biological role, deglycase that catalyzes the deglycation of the Maillard adducts formed between amino groups of proteins and reactive carbonyl groups of glyoxals. Thus, functions as a protein deglycase that repairs methylglyoxal- and glyoxal-glycated proteins, and releases repaired proteins and lactate or glycolate, respectively. Deglycates cysteine, arginine and lysine residues in proteins, and thus reactivates these proteins by reversing glycation by glyoxals. Acts on early glycation intermediates (hemithioacetals and aminocarbinols), preventing the formation of advanced glycation endproducts (AGE) that cause irreversible damage. Also displays proteolytic activity. The protein is Deglycase TK1284 of Thermococcus kodakarensis (strain ATCC BAA-918 / JCM 12380 / KOD1) (Pyrococcus kodakaraensis (strain KOD1)).